A 472-amino-acid polypeptide reads, in one-letter code: Argininosuccinate lyase (472 aa).

The protein belongs to the lyase 1 family. Argininosuccinate lyase subfamily.

The protein localises to the cytoplasm. It catalyses the reaction 2-(N(omega)-L-arginino)succinate = fumarate + L-arginine. The protein operates within amino-acid biosynthesis; L-arginine biosynthesis; L-arginine from L-ornithine and carbamoyl phosphate: step 3/3. In Synechococcus sp. (strain CC9605), this protein is Argininosuccinate lyase.